The chain runs to 961 residues: Valine--tRNA ligase (961 aa).

Positions 48–58 match the 'HIGH' region motif; sequence PNVTGSLHMGH. Positions 560-564 match the 'KMSKS' region motif; sequence KMSKS. Residue K563 coordinates ATP. The stretch at 892–961 forms a coiled coil; that stretch reads FINKDTELAR…QAQFKAIEAL (70 aa).

This sequence belongs to the class-I aminoacyl-tRNA synthetase family. ValS type 1 subfamily. Monomer.

It localises to the cytoplasm. The catalysed reaction is tRNA(Val) + L-valine + ATP = L-valyl-tRNA(Val) + AMP + diphosphate. In terms of biological role, catalyzes the attachment of valine to tRNA(Val). As ValRS can inadvertently accommodate and process structurally similar amino acids such as threonine, to avoid such errors, it has a 'posttransfer' editing activity that hydrolyzes mischarged Thr-tRNA(Val) in a tRNA-dependent manner. This Haemophilus ducreyi (strain 35000HP / ATCC 700724) protein is Valine--tRNA ligase.